Reading from the N-terminus, the 282-residue chain is MEIECHAKVNLTLDVLGRRPDGYHEIRSVMVPVSLHDRLVLEPAEEEIVLESRPPATDRLEENLAYRAAALLREATGCSRGAVIRLQKTIPVAAGLAGGSTDAAGVLTGLNRLWGTGLSDGELADLAIRLGSDVPFFIWSRPARVEGIGERVTPLPVAGPLWMVVATPDVPKSTGQVYRWFDELADVGPRPDAGAMEAALARGDAAAVGRALCNVFEQVMLPRHPEIARLKEAMLAAGALGAVMSGAGPSVLGVVPDREAGGRLLERIRPLSRDAWVVRTLV.

Lys-8 is a catalytic residue. 91–101 (PVAAGLAGGST) provides a ligand contact to ATP. Asp-133 is an active-site residue.

This sequence belongs to the GHMP kinase family. IspE subfamily.

It catalyses the reaction 4-CDP-2-C-methyl-D-erythritol + ATP = 4-CDP-2-C-methyl-D-erythritol 2-phosphate + ADP + H(+). It functions in the pathway isoprenoid biosynthesis; isopentenyl diphosphate biosynthesis via DXP pathway; isopentenyl diphosphate from 1-deoxy-D-xylulose 5-phosphate: step 3/6. Its function is as follows. Catalyzes the phosphorylation of the position 2 hydroxy group of 4-diphosphocytidyl-2C-methyl-D-erythritol. The polypeptide is 4-diphosphocytidyl-2-C-methyl-D-erythritol kinase (Symbiobacterium thermophilum (strain DSM 24528 / JCM 14929 / IAM 14863 / T)).